We begin with the raw amino-acid sequence, 413 residues long: uncharacterized protein (413 aa).

This is an uncharacterized protein from Bacillus subtilis (strain 168).